Here is a 414-residue protein sequence, read N- to C-terminus: Tar DNA-binding protein homolog 1 (414 aa).

Basic and acidic residues-rich tracts occupy residues 1–44 and 153–167; these read MADE…KTTD and DDGR…RAVE. 2 disordered regions span residues 1-58 and 132-167; these read MADE…GDEP and SSAD…RAVE. 2 RRM domains span residues 173-259 and 262-341; these read VDLI…QGRP and SRIF…IAQP. The interval 343–414 is disordered; the sequence is EENNQSVGPD…APGDSRGPGW (72 aa). Residues 361 to 373 are compositionally biased toward basic and acidic residues; sequence NRRERDRPDRRPI.

In terms of assembly, interacts with chromobox protein homolog hpl-2; interaction may maintain localization of hpl-2 to gene bodies. Widely expressed in a range of tissues including body wall muscles, pharynx and neurons of the midbody in adults and larvae.

It localises to the nucleus. The protein resides in the cytoplasm. Its function is as follows. RNA-binding protein which regulates transcription, splicing and RNA-editing. Limits the accumulation of double-stranded RNA by maintaining the abundance of the mature RNA transcripts that are formed from double-stranded precursor RNAs. Stress response protein that acts downstream of daf-16 in the insulin/IGF pathway to regulate longevity and the cellular stress response to osmotic, oxidative, proteotoxic and endoplasmic reticulum stress. Involved in the regulation of physiological processes including aging, fertility, growth and locomotion. Plays a role in maintaining localization of chromobox protein homolog hpl-2 to gene bodies, perhaps acting via binding to nascent RNA transcripts. This is Tar DNA-binding protein homolog 1 from Caenorhabditis elegans.